The following is a 382-amino-acid chain: tRNA (guanine-N(7)-)-methyltransferase non-catalytic subunit wuho (382 aa).

The tract at residues 40 to 59 is disordered; the sequence is VKDTDAGNEPNGNQTQPTPA. Polar residues predominate over residues 49–59; sequence PNGNQTQPTPA. WD repeat units follow at residues 149–190 and 192–230; these read GHMS…ECFC and GHTEYVGGIEIIPSEKLISVSGDRTLRLWDVTEGKELSK.

The protein belongs to the WD repeat TRM82 family. As to quaternary structure, forms a heterodimer with the catalytic subunit.

Its subcellular location is the nucleus. It functions in the pathway tRNA modification; N(7)-methylguanine-tRNA biosynthesis. In terms of biological role, required for the formation of N(7)-methylguanine at position 46 (m7G46) in tRNA. In the complex, it is required to stabilize and induce conformational changes of the catalytic subunit. The protein is tRNA (guanine-N(7)-)-methyltransferase non-catalytic subunit wuho of Anopheles gambiae (African malaria mosquito).